The sequence spans 68 residues: Defensin gallicin (68 aa).

An N-terminal signal peptide occupies residues 1–16 (MWIESDAGVAIDRHAR).

Post-translationally, contains 5 disulfide bonds. Expressed in hemolymph, gills, digestive gland, foot, adductor muscles and mantle.

It localises to the secreted. Its subcellular location is the target cell membrane. Shows antibacterial activity against numerous Gram-positive bacteria. It selectively inhibits peptidoglycan biosynthesis through complex formation with the cell wall precursor lipid II (1:1 molar ratio) thus inhibiting cell wall synthesis. The sequence is that of Defensin gallicin from Mytilus galloprovincialis (Mediterranean mussel).